A 280-amino-acid chain; its full sequence is MSAIDNLPPLREVIATHQLSARKSLGQNFLLDLNLTAKIARQAGDLTGCDVLEIGPGPGGLTRGLLSEGARKILAIEKDQRCLPALEDIAAAYPGRLEVINGDALEIDPLAHLTPPIRVAANLPYNVGTELLVRWLTPKEWPPFWQSLTLMFQREVAERIVAQPGSKAYGRLAILAQWRAEARIALSLPPGAFTPPPKVSSAVVHLTALPEPRYPADAAILSRVVAAAFNQRRKMLRASLKGVSPQIEDHLNAAGIPPTERAEQVSVEDFCALARSLEKG.

Residues Asn-28, Leu-30, Gly-55, Glu-77, Asp-103, and Asn-122 each coordinate S-adenosyl-L-methionine.

Belongs to the class I-like SAM-binding methyltransferase superfamily. rRNA adenine N(6)-methyltransferase family. RsmA subfamily.

The protein resides in the cytoplasm. The enzyme catalyses adenosine(1518)/adenosine(1519) in 16S rRNA + 4 S-adenosyl-L-methionine = N(6)-dimethyladenosine(1518)/N(6)-dimethyladenosine(1519) in 16S rRNA + 4 S-adenosyl-L-homocysteine + 4 H(+). Specifically dimethylates two adjacent adenosines (A1518 and A1519) in the loop of a conserved hairpin near the 3'-end of 16S rRNA in the 30S particle. May play a critical role in biogenesis of 30S subunits. In Ruegeria sp. (strain TM1040) (Silicibacter sp.), this protein is Ribosomal RNA small subunit methyltransferase A.